The chain runs to 876 residues: Eukaryotic translation initiation factor 3 subunit C (876 aa).

Disordered regions lie at residues 1–25 (MSRFFATGTDSESESSSEDEPVVRA) and 154–233 (SXFR…IREQ). Acidic residues predominate over residues 11-20 (SESESSSEDE). 2 stretches are compositionally biased toward basic and acidic residues: residues 154-172 (SXFREDPDLPDDNERKDSS) and 182-192 (KPIKEKPKPEP). A compositionally biased stretch (low complexity) spans 206-219 (SMDWASSSSDSSFS). A PCI domain is found at 632-808 (FHMHINLELL…ECAILHRSEP (177 aa)). The interval 839-876 (FFQRGGAQRGEGRQRERPREGWNRRTRNRRRDDERADD) is disordered. Residues 848–861 (GEGRQRERPREGWN) are compositionally biased toward basic and acidic residues.

Belongs to the eIF-3 subunit C family. As to quaternary structure, component of the eukaryotic translation initiation factor 3 (eIF-3) complex.

Its subcellular location is the cytoplasm. Its function is as follows. Component of the eukaryotic translation initiation factor 3 (eIF-3) complex, which is involved in protein synthesis of a specialized repertoire of mRNAs and, together with other initiation factors, stimulates binding of mRNA and methionyl-tRNAi to the 40S ribosome. The eIF-3 complex specifically targets and initiates translation of a subset of mRNAs involved in cell proliferation. This chain is Eukaryotic translation initiation factor 3 subunit C, found in Bombyx mori (Silk moth).